A 147-amino-acid polypeptide reads, in one-letter code: Siroheme decarboxylase NirG subunit (147 aa).

This sequence belongs to the Ahb/Nir family. Probably forms a complex composed of NirD, NirL, NirG and NirH. All proteins are required for the total conversion of siroheme to didecarboxysiroheme.

The catalysed reaction is siroheme + 2 H(+) = 12,18-didecarboxysiroheme + 2 CO2. Its pathway is porphyrin-containing compound metabolism. In terms of biological role, involved in heme d1 biosynthesis. Catalyzes the decarboxylation of siroheme into didecarboxysiroheme. In Stutzerimonas stutzeri (Pseudomonas stutzeri), this protein is Siroheme decarboxylase NirG subunit.